We begin with the raw amino-acid sequence, 120 residues long: NAD(P)H-quinone oxidoreductase subunit 3 (120 aa).

Transmembrane regions (helical) follow at residues 2 to 22 (FVLS…LVPI), 64 to 84 (MFAL…PWAV), and 89 to 109 (LGLL…IALV).

This sequence belongs to the complex I subunit 3 family. In terms of assembly, NDH-1 can be composed of about 15 different subunits; different subcomplexes with different compositions have been identified which probably have different functions.

The protein resides in the cellular thylakoid membrane. The enzyme catalyses a plastoquinone + NADH + (n+1) H(+)(in) = a plastoquinol + NAD(+) + n H(+)(out). The catalysed reaction is a plastoquinone + NADPH + (n+1) H(+)(in) = a plastoquinol + NADP(+) + n H(+)(out). NDH-1 shuttles electrons from an unknown electron donor, via FMN and iron-sulfur (Fe-S) centers, to quinones in the respiratory and/or the photosynthetic chain. The immediate electron acceptor for the enzyme in this species is believed to be plastoquinone. Couples the redox reaction to proton translocation, and thus conserves the redox energy in a proton gradient. Cyanobacterial NDH-1 also plays a role in inorganic carbon-concentration. The sequence is that of NAD(P)H-quinone oxidoreductase subunit 3 from Picosynechococcus sp. (strain ATCC 27264 / PCC 7002 / PR-6) (Agmenellum quadruplicatum).